A 232-amino-acid polypeptide reads, in one-letter code: Phosphatidylserine decarboxylase proenzyme (232 aa).

Ser190 serves as the catalytic Schiff-base intermediate with substrate; via pyruvic acid. At Ser190 the chain carries Pyruvic acid (Ser); by autocatalysis.

Belongs to the phosphatidylserine decarboxylase family. PSD-A subfamily. In terms of assembly, heterodimer of a large membrane-associated beta subunit and a small pyruvoyl-containing alpha subunit. Requires pyruvate as cofactor. Is synthesized initially as an inactive proenzyme. Formation of the active enzyme involves a self-maturation process in which the active site pyruvoyl group is generated from an internal serine residue via an autocatalytic post-translational modification. Two non-identical subunits are generated from the proenzyme in this reaction, and the pyruvate is formed at the N-terminus of the alpha chain, which is derived from the carboxyl end of the proenzyme. The post-translation cleavage follows an unusual pathway, termed non-hydrolytic serinolysis, in which the side chain hydroxyl group of the serine supplies its oxygen atom to form the C-terminus of the beta chain, while the remainder of the serine residue undergoes an oxidative deamination to produce ammonia and the pyruvoyl prosthetic group on the alpha chain.

Its subcellular location is the cell membrane. The enzyme catalyses a 1,2-diacyl-sn-glycero-3-phospho-L-serine + H(+) = a 1,2-diacyl-sn-glycero-3-phosphoethanolamine + CO2. Its pathway is phospholipid metabolism; phosphatidylethanolamine biosynthesis; phosphatidylethanolamine from CDP-diacylglycerol: step 2/2. Its function is as follows. Catalyzes the formation of phosphatidylethanolamine (PtdEtn) from phosphatidylserine (PtdSer). The chain is Phosphatidylserine decarboxylase proenzyme from Rhodopseudomonas palustris (strain HaA2).